The primary structure comprises 165 residues: Endoribonuclease YbeY (165 aa).

3 residues coordinate Zn(2+): His130, His134, and His140.

The protein belongs to the endoribonuclease YbeY family. Zn(2+) is required as a cofactor.

It localises to the cytoplasm. In terms of biological role, single strand-specific metallo-endoribonuclease involved in late-stage 70S ribosome quality control and in maturation of the 3' terminus of the 16S rRNA. The sequence is that of Endoribonuclease YbeY from Streptococcus pyogenes serotype M1.